A 285-amino-acid polypeptide reads, in one-letter code: 4-diphosphocytidyl-2-C-methyl-D-erythritol kinase (285 aa).

The active site involves lysine 14. 97-107 serves as a coordination point for ATP; that stretch reads PMGGGIGGGSS. Residue aspartate 139 is part of the active site.

It belongs to the GHMP kinase family. IspE subfamily.

It catalyses the reaction 4-CDP-2-C-methyl-D-erythritol + ATP = 4-CDP-2-C-methyl-D-erythritol 2-phosphate + ADP + H(+). Its pathway is isoprenoid biosynthesis; isopentenyl diphosphate biosynthesis via DXP pathway; isopentenyl diphosphate from 1-deoxy-D-xylulose 5-phosphate: step 3/6. Its function is as follows. Catalyzes the phosphorylation of the position 2 hydroxy group of 4-diphosphocytidyl-2C-methyl-D-erythritol. The sequence is that of 4-diphosphocytidyl-2-C-methyl-D-erythritol kinase from Tolumonas auensis (strain DSM 9187 / NBRC 110442 / TA 4).